The sequence spans 99 residues: NADH-quinone oxidoreductase subunit K (99 aa).

The next 3 membrane-spanning stretches (helical) occupy residues 3–23 (PENY…GVLI), 28–48 (IIVF…FVTF), and 59–79 (VFAF…LAII).

Belongs to the complex I subunit 4L family. In terms of assembly, NDH-1 is composed of 14 different subunits. Subunits NuoA, H, J, K, L, M, N constitute the membrane sector of the complex.

The protein resides in the cell membrane. The enzyme catalyses a quinone + NADH + 5 H(+)(in) = a quinol + NAD(+) + 4 H(+)(out). NDH-1 shuttles electrons from NADH, via FMN and iron-sulfur (Fe-S) centers, to quinones in the respiratory chain. The immediate electron acceptor for the enzyme in this species is believed to be a menaquinone. Couples the redox reaction to proton translocation (for every two electrons transferred, four hydrogen ions are translocated across the cytoplasmic membrane), and thus conserves the redox energy in a proton gradient. The polypeptide is NADH-quinone oxidoreductase subunit K (Rhodococcus jostii (strain RHA1)).